A 168-amino-acid chain; its full sequence is Photosystem I assembly protein Ycf3 (168 aa).

TPR repeat units follow at residues 35–68 (AFTY…EMDP), 72–105 (SYIL…NPFL), and 120–153 (GEQA…TPGN).

Belongs to the Ycf3 family.

The protein resides in the plastid. It is found in the chloroplast thylakoid membrane. In terms of biological role, essential for the assembly of the photosystem I (PSI) complex. May act as a chaperone-like factor to guide the assembly of the PSI subunits. The polypeptide is Photosystem I assembly protein Ycf3 (Plantago lanceolata (English plantain)).